Here is a 181-residue protein sequence, read N- to C-terminus: Kappa-casein (181 aa).

A signal peptide spans 1–21 (MMRNFIVVVNILALTLPFLAA). Threonine 123 carries the post-translational modification Phosphothreonine. Threonine 134, threonine 144, and threonine 155 each carry an O-linked (GalNAc...) threonine glycan. The residue at position 162 (serine 162) is a Phosphoserine; alternate. O-linked (GalNAc...) serine; alternate glycosylation is present at serine 162. Position 178 is a phosphoserine (serine 178).

The protein belongs to the kappa-casein family. In terms of tissue distribution, mammary gland specific. Secreted in milk.

Its subcellular location is the secreted. Functionally, kappa-casein stabilizes micelle formation, preventing casein precipitation in milk. The sequence is that of Kappa-casein (Csn3) from Mus musculus (Mouse).